The sequence spans 275 residues: Bis(5'-nucleosyl)-tetraphosphatase, symmetrical (275 aa).

This sequence belongs to the Ap4A hydrolase family.

The enzyme catalyses P(1),P(4)-bis(5'-adenosyl) tetraphosphate + H2O = 2 ADP + 2 H(+). In terms of biological role, hydrolyzes diadenosine 5',5'''-P1,P4-tetraphosphate to yield ADP. The polypeptide is Bis(5'-nucleosyl)-tetraphosphatase, symmetrical (Nitrosospira multiformis (strain ATCC 25196 / NCIMB 11849 / C 71)).